The chain runs to 1708 residues: Clathrin heavy chain 1 (1708 aa).

The interval 1-492 is globular terminal domain; the sequence is MAAANAPIAM…VDNDLALKIY (492 aa). WD40-like repeat stretches follow at residues 25–67, 68–113, 114–155, 156–205, 206–270, 271–314, and 315–343; these read FVTF…RPIT, ADSA…MPEQ, VVFW…ANLA, NNQI…QALE, AHAA…PDFQ, DDFP…ISPD, and PIFL…ATVN. The binding site for the uncoating ATPase, involved in lattice disassembly stretch occupies residues 462–478; that stretch reads ENWLAEDKLECSEELGD. The tract at residues 493–536 is flexible linker; it reads IKARATPKVVAAFAERREFDKILIYSKQVGYTPDYLFLLQTILR. A distal segment region spans residues 537-648; it reads TDPQGAVNFA…RALQHYTELP (112 aa). The heavy chain arm stretch occupies residues 537 to 1708; that stretch reads TDPQGAVNFA…AYGMPPMGSY (1172 aa). CHCR repeat units follow at residues 551 to 697, 700 to 842, 847 to 986, 993 to 1138, 1142 to 1283, 1288 to 1434, and 1437 to 1580; these read QMEG…QIVV, AKEY…PEDF, ILSV…QLID, LPES…VSEA, FIRA…FRLA, LNII…DLIN, and LNVL…KECF. Residues 653–1708 form a proximal segment region; sequence VMVNTHAIEP…AYGMPPMGSY (1056 aa). Residues 1227 to 1536 are involved in binding clathrin light chain; sequence AAKIIYAFIS…YIYKKAGRWK (310 aa). The interval 1564–1708 is trimerization; it reads SEDLLVYFIE…AYGMPPMGSY (145 aa).

It belongs to the clathrin heavy chain family. Clathrin triskelions, composed of 3 heavy chains and 3 light chains, are the basic subunits of the clathrin coat.

The protein resides in the cytoplasmic vesicle membrane. It localises to the membrane. Its subcellular location is the coated pit. In terms of biological role, clathrin is the major protein of the polyhedral coat of coated pits and vesicles. This Oryza sativa subsp. japonica (Rice) protein is Clathrin heavy chain 1.